Reading from the N-terminus, the 588-residue chain is SSSSTTTIPLCTNKSLSSSFTTNNSSFLSKPSQLFLHGRRNQSFKVSCNANNNVGEHDKNLDTVDRRNVLLGLGGLYGAANLAPLASASPIPPPDLKSCGVAHVTEGVDVTYSCCPPVPDDIDSVPYYKFPPMTKLRIRPPAHAADEEYVAKYQLATSRMRELDKDSFDPLGFKQQANIHCAYCNGAYKVGGKELQVHFSWLFFPFHRWYLYFYERILGSLINDPTFALPYWNWDHPKGMRIPPMFDREGSSLYDDKRNQNHRNGTIIDLGHFGQEVDTPQLQIMTNNLTLMYRQMVTNAPCPSQFFGAAYPLGTEPSPGMGTIENIPHTPVHIWTGDSPRQKNGENMGNFYSAGLDPIFYCHHANVDRMWDEWKLIGGKRRDLSNKDWLNSEFFFYDENRNPYRVKVRDCLDSKKMGFSYAPMPTPWRNFKPIRKTTAGKVNTASIAPVTKVFPLAKLDRAISFSITRPASSRTTQEKNEQEEILTFNKVAYDDTKYVRFDVFLNVDKTVNADELDKAEFAGSYTSLPHVHGNNTNHVTSVTFKLAITELLEDNGLEDEDTIAVTLVPKVGGEGVSIESVEIKLEDC.

Residues 1–88 (SSSSTTTIPL…AANLAPLASA (88 aa)) constitute a chloroplast transit peptide. Cystine bridges form between Cys99/Cys115 and Cys114/Cys181. Positions 180, 198, 207, 329, 333, and 364 each coordinate Cu cation. The 2'-(S-cysteinyl)-histidine (Cys-His) cross-link spans 184 to 198 (CNGAYKVGGKELQVH).

This sequence belongs to the tyrosinase family. The cofactor is Cu(2+).

The protein localises to the plastid. It is found in the chloroplast thylakoid lumen. The catalysed reaction is 2 catechol + O2 = 2 1,2-benzoquinone + 2 H2O. Functionally, catalyzes the oxidation of mono- and o-diphenols to o-diquinones. This Solanum tuberosum (Potato) protein is Catechol oxidase B, chloroplastic.